Here is a 605-residue protein sequence, read N- to C-terminus: Probable potassium transport system protein Kup (605 aa).

The next 12 membrane-spanning stretches (helical) occupy residues 18–38, 46–66, 97–117, 138–158, 169–189, 204–224, 247–267, 287–307, 339–359, 368–388, 395–415, and 418–438; these read GLVFGDIGTSPIYTLTVIIAL, ILGIISLIVWTLIILVHLEYA, MAFVTFLTYLGVALLMGDGVI, GLSQNTLILIAGTIALFLFVF, AFGPIMVLWFAALALSGAISV, AISFLMHNGLPGFFVLSEVIL, AWYFVFVALVINYLGQGAFII, FYIPFLILTILATIIASQALI, IYIGSVNWLLLCLVILIMLVF, AYGFAVTGTMVITGIMMTMIF, WKVPLALFVTLVDVVFLVSNC, and LPHGGYWSLILASVPLAVILI.

It belongs to the HAK/KUP transporter (TC 2.A.72) family.

The protein resides in the cell inner membrane. The catalysed reaction is K(+)(in) + H(+)(in) = K(+)(out) + H(+)(out). In terms of biological role, transport of potassium into the cell. Likely operates as a K(+):H(+) symporter. The polypeptide is Probable potassium transport system protein Kup (Pelobacter propionicus (strain DSM 2379 / NBRC 103807 / OttBd1)).